Reading from the N-terminus, the 253-residue chain is Tetraspanin-3 (253 aa).

The Cytoplasmic segment spans residues 1-11 (MGQCGITSSKT). Residues 12 to 32 (VLVFLNLIFWGAAGILCYVGA) form a helical membrane-spanning segment. Topologically, residues 33–50 (YVFITYDDYDHFFEDVYT) are extracellular. A helical transmembrane segment spans residues 51–71 (LFPAVVIIAVGALLFIIGLIG). Residues 72 to 85 (CCATIRESRCGLAT) are Cytoplasmic-facing. Residues 86-106 (FVFILLLVFVTEVVVVVLGYV) form a helical membrane-spanning segment. Residues 107–212 (YRAKVENEVD…KKLQEILMHV (106 aa)) are Extracellular-facing. Asparagine 127, asparagine 152, asparagine 167, and asparagine 183 each carry an N-linked (GlcNAc...) asparagine glycan. The helical transmembrane segment at 213–233 (IWAALAFAAIQLLGMLCACIV) threads the bilayer. Over 234 to 253 (LCRRSRDPAYELLITGGTYA) the chain is Cytoplasmic.

This sequence belongs to the tetraspanin (TM4SF) family. As to quaternary structure, interacts with claudin-11/CLDN11 and integrins.

It is found in the membrane. Regulates the proliferation and migration of oligodendrocytes, a process essential for normal myelination and repair. The polypeptide is Tetraspanin-3 (Tspan3) (Mus musculus (Mouse)).